Consider the following 220-residue polypeptide: Response regulator ArlR (220 aa).

Residues 3-116 (KILIVEDEQN…ELLARIRAML (114 aa)) enclose the Response regulatory domain. At Asp52 the chain carries 4-aspartylphosphate. The segment at residues 122–220 (KNLIDIKGII…VRGVGYVVRQ (99 aa)) is a DNA-binding region (ompR/PhoB-type).

Phosphorylated by ArlS.

The protein localises to the cytoplasm. Member of the two-component regulatory system ArlS/ArlR. The protein is Response regulator ArlR (arlR) of Staphylococcus saprophyticus subsp. saprophyticus (strain ATCC 15305 / DSM 20229 / NCIMB 8711 / NCTC 7292 / S-41).